Consider the following 520-residue polypeptide: Anthranilate synthase component 1 (520 aa).

L-tryptophan contacts are provided by residues S40 and 291 to 293 (PYM). Chorismate is bound at residue 328–329 (GT). E361 lines the Mg(2+) pocket. Residues Y449, R469, 483–485 (GAG), and G485 each bind chorismate. E498 is a Mg(2+) binding site.

The protein belongs to the anthranilate synthase component I family. Heterotetramer consisting of two non-identical subunits: a beta subunit (TrpG) and a large alpha subunit (TrpE). Mg(2+) serves as cofactor.

The catalysed reaction is chorismate + L-glutamine = anthranilate + pyruvate + L-glutamate + H(+). Its pathway is amino-acid biosynthesis; L-tryptophan biosynthesis; L-tryptophan from chorismate: step 1/5. Its activity is regulated as follows. Feedback inhibited by tryptophan. Part of a heterotetrameric complex that catalyzes the two-step biosynthesis of anthranilate, an intermediate in the biosynthesis of L-tryptophan. In the first step, the glutamine-binding beta subunit (TrpG) of anthranilate synthase (AS) provides the glutamine amidotransferase activity which generates ammonia as a substrate that, along with chorismate, is used in the second step, catalyzed by the large alpha subunit of AS (TrpE) to produce anthranilate. In the absence of TrpG, TrpE can synthesize anthranilate directly from chorismate and high concentrations of ammonia. The sequence is that of Anthranilate synthase component 1 (trpE) from Buchnera aphidicola subsp. Pemphigus spyrothecae.